The sequence spans 478 residues: Noelin-3 (478 aa).

Residues 1–23 form the signal peptide; that stretch reads MSPPLLKLGAVLSTMAMISNWMS. N-linked (GlcNAc...) asparagine glycans are attached at residues Asn-33, Asn-95, Asn-179, Asn-299, and Asn-465. Residues 77 to 217 adopt a coiled-coil conformation; sequence CSRDAKSRQL…TRLRDCMKKL (141 aa). One can recognise an Olfactomedin-like domain in the interval 218–470; that stretch reads TCGKLMKITG…QVLFNVTLFH (253 aa). Cys-219 and Cys-401 are oxidised to a cystine.

Peripherally associated with AMPAR complex. AMPAR complex consists of an inner core made of 4 pore-forming GluA/GRIA proteins (GRIA1, GRIA2, GRIA3 and GRIA4) and 4 major auxiliary subunits arranged in a twofold symmetry. One of the two pairs of distinct binding sites is occupied either by CNIH2, CNIH3 or CACNG2, CACNG3. The other harbors CACNG2, CACNG3, CACNG4, CACNG8 or GSG1L. This inner core of AMPAR complex is complemented by outer core constituents binding directly to the GluA/GRIA proteins at sites distinct from the interaction sites of the inner core constituents. Outer core constituents include at least PRRT1, PRRT2, CKAMP44/SHISA9, FRRS1L and NRN1. The proteins of the inner and outer core serve as a platform for other, more peripherally associated AMPAR constituents, including OLFM3. Alone or in combination, these auxiliary subunits control the gating and pharmacology of the AMPAR complex and profoundly impact their biogenesis and protein processing. Homodimer. Interacts with MYOC. Interacts with OLFM2. In terms of tissue distribution, in the eye, expressed in trabecular meshwork and neural retina; in non-ocular tissues, expressed in brain and lung.

The protein resides in the secreted. It localises to the synapse. This Homo sapiens (Human) protein is Noelin-3 (OLFM3).